A 241-amino-acid polypeptide reads, in one-letter code: Large ribosomal subunit protein uL2 (241 aa).

A compositionally biased stretch (basic residues) spans 1 to 12; the sequence is MGKRLISQRRGR. Disordered regions lie at residues 1-21 and 200-241; these read MGKRLISQRRGRGTPTYRSAS and AVDH…GKRR.

Belongs to the universal ribosomal protein uL2 family. As to quaternary structure, part of the 50S ribosomal subunit. Forms a bridge to the 30S subunit in the 70S ribosome.

One of the primary rRNA binding proteins. Required for association of the 30S and 50S subunits to form the 70S ribosome, for tRNA binding and peptide bond formation. It has been suggested to have peptidyltransferase activity; this is somewhat controversial. Makes several contacts with the 16S rRNA in the 70S ribosome. This Methanothermobacter thermautotrophicus (strain ATCC 29096 / DSM 1053 / JCM 10044 / NBRC 100330 / Delta H) (Methanobacterium thermoautotrophicum) protein is Large ribosomal subunit protein uL2.